A 324-amino-acid polypeptide reads, in one-letter code: Beta-ketoacyl-[acyl-carrier-protein] synthase III (324 aa).

Catalysis depends on residues Cys116 and His251. The tract at residues 252-256 (QANLR) is ACP-binding. Asn281 is an active-site residue.

Belongs to the thiolase-like superfamily. FabH family. As to quaternary structure, homodimer.

The protein resides in the cytoplasm. It carries out the reaction malonyl-[ACP] + acetyl-CoA + H(+) = 3-oxobutanoyl-[ACP] + CO2 + CoA. It functions in the pathway lipid metabolism; fatty acid biosynthesis. Its function is as follows. Catalyzes the condensation reaction of fatty acid synthesis by the addition to an acyl acceptor of two carbons from malonyl-ACP. Catalyzes the first condensation reaction which initiates fatty acid synthesis and may therefore play a role in governing the total rate of fatty acid production. Possesses both acetoacetyl-ACP synthase and acetyl transacylase activities. Its substrate specificity determines the biosynthesis of branched-chain and/or straight-chain of fatty acids. The sequence is that of Beta-ketoacyl-[acyl-carrier-protein] synthase III from Xylella fastidiosa (strain Temecula1 / ATCC 700964).